The primary structure comprises 327 residues: MPGPTQTLSPNGENNNDIIQDNNGTIIPFRKHTVRGERSYSWGMAVNVYSTSITQETMSRHDIIAWVNDIVSLNYTKVEQLCSGAAYCQFMDMLFPGCISLKKVKFQAKLEHEYIHNFKLLQASFKRMNVDKVIPVEKLVKGRFQDNLDFIQWFKKFYDANYDGKEYDPVEARQGQDAIPPPDPGEQIFNLPKKSHHANSPTAGAAKSSPAAKPGSTPSRPSSAKRASSSGSASRSDKDLETQVIQLNEQVHSLKLALEGVEKERDFYFGKLREIELLCQEHGQENDDLVQRLMDVLYASEEHEGHTEEPEAEEQAHEQQPPQQEEY.

The segment at 1-21 is disordered; sequence MPGPTQTLSPNGENNNDIIQD. S9 carries the phosphoserine modification. The 103-residue stretch at 57 to 159 folds into the Calponin-homology (CH) domain; it reads TMSRHDIIAW…FIQWFKKFYD (103 aa). Y167 carries the post-translational modification Phosphotyrosine. Disordered regions lie at residues 171-240 and 299-327; these read EARQ…DKDL and ASEE…QEEY. Positions 187–327 are DCTN1-binding; that stretch reads QIFNLPKKSH…EQQPPQQEEY (141 aa). Low complexity predominate over residues 200–234; sequence SPTAGAAKSSPAAKPGSTPSRPSSAKRASSSGSAS. Residue S219 is modified to Phosphoserine. Residues 236-306 enclose the EB1 C-terminal domain; the sequence is SDKDLETQVI…LYASEEHEGH (71 aa). The tract at residues 259–302 is APC-binding; that stretch reads EGVEKERDFYFGKLREIELLCQEHGQENDDLVQRLMDVLYASEE. The segment covering 300–317 has biased composition (basic and acidic residues); it reads SEEHEGHTEEPEAEEQAH. Residues 318–327 show a composition bias toward low complexity; it reads EQQPPQQEEY.

It belongs to the MAPRE family. Interacts with DCTN1. Interacts with APC (via C-terminal). Interacts with monomeric and polymerized tubulin. Interacts with SLAIN1. Interacts (via the N-terminal region) with BAG1.

It is found in the cytoplasm. It localises to the cytoskeleton. Functionally, may be involved in microtubule polymerization, and spindle function by stabilizing microtubules and anchoring them at centrosomes. May play a role in cell migration. This Pongo abelii (Sumatran orangutan) protein is Microtubule-associated protein RP/EB family member 2 (MAPRE2).